The primary structure comprises 508 residues: UTP--glucose-1-phosphate uridylyltransferase (508 aa).

Phosphoserine is present on S13. UTP contacts are provided by residues 113-116 (LNGG), K127, Q190, and G222. 115 to 116 (GG) is a binding site for substrate. A Mg(2+)-binding site is contributed by K127. Substrate is bound by residues H223 and 251 to 253 (NID). UTP contacts are provided by D253 and K396. Mg(2+) is bound at residue D253. K396 is a catalytic residue. T426 is subject to Phosphothreonine. S434 is subject to Phosphoserine. An N6-acetyllysine modification is found at K438. Residues S448 and S461 each carry the phosphoserine modification. The segment at 457 to 508 (HLTVSGDVTFGKNVSLKGTVIIIXNHGDRIDIPPGAVLENKIVSGNLRILDH) is oligomerization. A critical for end-to-end subunit interaction region spans residues 502 to 503 (NL).

It belongs to the UDPGP type 1 family. In terms of assembly, homooctamer.

It localises to the cytoplasm. It catalyses the reaction alpha-D-glucose 1-phosphate + UTP + H(+) = UDP-alpha-D-glucose + diphosphate. It participates in glycan biosynthesis; glycogen biosynthesis. In terms of biological role, UTP--glucose-1-phosphate uridylyltransferase catalyzing the conversion of glucose-1-phosphate into UDP-glucose, a crucial precursor for the production of glycogen. In Sus scrofa (Pig), this protein is UTP--glucose-1-phosphate uridylyltransferase (UGP2).